A 456-amino-acid chain; its full sequence is MELSSLTAVSPVDGRYGDKVSALRGIFSEYGLLKFRVQVEVRWLQKLAAHAAIKEVPAFAADAIGYLDAIVASFSEEDAARIKTIERTTNHDVKAVEYFLKEKVAEIPELHAVSEFIHFACTSEDINNLSHALMLKTARDEVILPYWRQLIDGIKDLAVQYRDIPLLSRTHGQPATPSTIGKEMANVAYRMERQYRQLNQVEILGKINGAVGNYNAHIAAYPEVDWHQFSEEFVTSLGIQWNPYTTQIEPHDYIAELFDCVARFNTILIDFDRDVWGYIALNHFKQKTIAGEIGSSTMPHKVNPIDFENSEGNLGLSNAVLQHLASKLPVSRWQRDLTDSTVLRNLGVGIGYALIAYQSTLKGVSKLEVNRDHLLDELDHNWEVLAEPIQTVMRRYGIEKPYEKLKELTRGKRVDAEGMKQFIDGLALPEEEKARLKAMTPANYIGRAITMVDELK.

N(6)-(1,2-dicarboxyethyl)-AMP contacts are provided by residues 15–16 (RY) and 90–92 (NHD). The residue at position 94 (lysine 94) is an N6-acetyllysine. 122–123 (TS) is a N(6)-(1,2-dicarboxyethyl)-AMP binding site. The active-site Proton donor/acceptor is histidine 171. Glutamine 247 is a N(6)-(1,2-dicarboxyethyl)-AMP binding site. The Proton donor/acceptor role is filled by serine 295. Residues serine 296, 301–303 (KVN), asparagine 309, arginine 335, and 340–344 (STVLR) contribute to the N(6)-(1,2-dicarboxyethyl)-AMP site. Lysine 366 carries the post-translational modification N6-acetyllysine.

The protein belongs to the lyase 1 family. Adenylosuccinate lyase subfamily. Homotetramer. Residues from neighboring subunits contribute catalytic and substrate-binding residues to each active site.

It catalyses the reaction N(6)-(1,2-dicarboxyethyl)-AMP = fumarate + AMP. It carries out the reaction (2S)-2-[5-amino-1-(5-phospho-beta-D-ribosyl)imidazole-4-carboxamido]succinate = 5-amino-1-(5-phospho-beta-D-ribosyl)imidazole-4-carboxamide + fumarate. The protein operates within purine metabolism; AMP biosynthesis via de novo pathway; AMP from IMP: step 2/2. Its pathway is purine metabolism; IMP biosynthesis via de novo pathway; 5-amino-1-(5-phospho-D-ribosyl)imidazole-4-carboxamide from 5-amino-1-(5-phospho-D-ribosyl)imidazole-4-carboxylate: step 2/2. Catalyzes two reactions in de novo purine nucleotide biosynthesis. Catalyzes the breakdown of 5-aminoimidazole- (N-succinylocarboxamide) ribotide (SAICAR or 2-[5-amino-1-(5-phospho-beta-D-ribosyl)imidazole-4-carboxamido]succinate) to 5-aminoimidazole-4-carboxamide ribotide (AICAR or 5-amino-1-(5-phospho-beta-D-ribosyl)imidazole-4-carboxamide) and fumarate, and of adenylosuccinate (ADS or N(6)-(1,2-dicarboxyethyl)-AMP) to adenosine monophosphate (AMP) and fumarate. This is Adenylosuccinate lyase (purB) from Escherichia coli O6:H1 (strain CFT073 / ATCC 700928 / UPEC).